The chain runs to 529 residues: AAA ATPase forming ring-shaped complexes (529 aa).

A coiled-coil region spans residues 15–62 (MERQDERLRSLSEANDRLMAKNHALAKALTRATQELTKAKAQLNQLAG). An ATP-binding site is contributed by 253 to 258 (GNGKTL).

Belongs to the AAA ATPase family. As to quaternary structure, homohexamer. Assembles into a hexameric ring structure.

The sequence is that of AAA ATPase forming ring-shaped complexes from Bifidobacterium dentium (strain ATCC 27534 / DSM 20436 / JCM 1195 / Bd1).